Reading from the N-terminus, the 509-residue chain is Maturase K (509 aa).

This sequence belongs to the intron maturase 2 family. MatK subfamily.

The protein resides in the plastid. Its subcellular location is the chloroplast. In terms of biological role, usually encoded in the trnK tRNA gene intron. Probably assists in splicing its own and other chloroplast group II introns. The chain is Maturase K from Atropa belladonna (Belladonna).